The primary structure comprises 111 residues: Ribonuclease P protein component (111 aa).

Belongs to the RnpA family. In terms of assembly, consists of a catalytic RNA component (M1 or rnpB) and a protein subunit.

The catalysed reaction is Endonucleolytic cleavage of RNA, removing 5'-extranucleotides from tRNA precursor.. RNaseP catalyzes the removal of the 5'-leader sequence from pre-tRNA to produce the mature 5'-terminus. It can also cleave other RNA substrates such as 4.5S RNA. The protein component plays an auxiliary but essential role in vivo by binding to the 5'-leader sequence and broadening the substrate specificity of the ribozyme. The chain is Ribonuclease P protein component from Borreliella afzelii (strain PKo) (Borrelia afzelii).